A 417-amino-acid chain; its full sequence is MMPTQRLAEADPQIAKLIREETRRQAEGLELIASENFVSPAVLEALGSTLTNKYAEGYPGKRYYGGCEVVDQVEQLAIDRAKQLFGADHANVQPHAGSQANMAAYFALAKPGDTVLAMSLNFGGHLTHGSPVNFSGKLFKIVPYGLRQSDETIDMDEVARLAREHKPRILMVGASAYSRTLHFDRFAEIANEVGAAMVVDMAHIAGLVAAGLHPSPVPHSEIVTTTTHKTLRGPRGGMILCREAHAKTLNSQIFPGIQGGPLEHVIAAKAVAFGEALRPEFKAYQRRIVENAQVLAEGLKSAGLRLVSGGTDNHLMLVDLRPKKLTGKIAEEALGKAGITVNKNMIPWDPEKPMTTSGIRVGTPALTTRGMGSREMTLVAALIGRVLDAPADEQVLARVRGEVKDLCAHFPMYADRV.

(6S)-5,6,7,8-tetrahydrofolate contacts are provided by residues leucine 120 and 124–126 (GHL). Lysine 229 bears the N6-(pyridoxal phosphate)lysine mark.

It belongs to the SHMT family. Homodimer. Pyridoxal 5'-phosphate serves as cofactor.

The protein localises to the cytoplasm. It carries out the reaction (6R)-5,10-methylene-5,6,7,8-tetrahydrofolate + glycine + H2O = (6S)-5,6,7,8-tetrahydrofolate + L-serine. It functions in the pathway one-carbon metabolism; tetrahydrofolate interconversion. It participates in amino-acid biosynthesis; glycine biosynthesis; glycine from L-serine: step 1/1. Functionally, catalyzes the reversible interconversion of serine and glycine with tetrahydrofolate (THF) serving as the one-carbon carrier. This reaction serves as the major source of one-carbon groups required for the biosynthesis of purines, thymidylate, methionine, and other important biomolecules. Also exhibits THF-independent aldolase activity toward beta-hydroxyamino acids, producing glycine and aldehydes, via a retro-aldol mechanism. This is Serine hydroxymethyltransferase from Anaeromyxobacter dehalogenans (strain 2CP-1 / ATCC BAA-258).